A 176-amino-acid chain; its full sequence is NAD(P)H-quinone oxidoreductase subunit J (176 aa).

It belongs to the complex I 30 kDa subunit family. As to quaternary structure, NDH-1 can be composed of about 15 different subunits; different subcomplexes with different compositions have been identified which probably have different functions.

It localises to the cellular thylakoid membrane. The catalysed reaction is a plastoquinone + NADH + (n+1) H(+)(in) = a plastoquinol + NAD(+) + n H(+)(out). It carries out the reaction a plastoquinone + NADPH + (n+1) H(+)(in) = a plastoquinol + NADP(+) + n H(+)(out). Its function is as follows. NDH-1 shuttles electrons from an unknown electron donor, via FMN and iron-sulfur (Fe-S) centers, to quinones in the respiratory and/or the photosynthetic chain. The immediate electron acceptor for the enzyme in this species is believed to be plastoquinone. Couples the redox reaction to proton translocation, and thus conserves the redox energy in a proton gradient. Cyanobacterial NDH-1 also plays a role in inorganic carbon-concentration. In Nostoc punctiforme (strain ATCC 29133 / PCC 73102), this protein is NAD(P)H-quinone oxidoreductase subunit J.